A 138-amino-acid chain; its full sequence is UPF0355 protein SSP2326 (138 aa).

The segment at 115–138 is disordered; that stretch reads NVAFETNQTKSNSHYSEETNGPKS. Over residues 118-138 the composition is skewed to polar residues; the sequence is FETNQTKSNSHYSEETNGPKS.

Belongs to the UPF0355 family.

This is UPF0355 protein SSP2326 from Staphylococcus saprophyticus subsp. saprophyticus (strain ATCC 15305 / DSM 20229 / NCIMB 8711 / NCTC 7292 / S-41).